The following is a 198-amino-acid chain: Carnitine operon protein CaiE (198 aa).

The disordered stretch occupies residues 174–198 (KPLTQAEENRPRLKGTTDVKPKSAQ). Residues 180-198 (EENRPRLKGTTDVKPKSAQ) are compositionally biased toward basic and acidic residues.

The protein belongs to the transferase hexapeptide repeat family.

It functions in the pathway amine and polyamine metabolism; carnitine metabolism. Functionally, overproduction of CaiE stimulates the activity of CaiB and CaiD. The chain is Carnitine operon protein CaiE from Salmonella dublin (strain CT_02021853).